Here is a 269-residue protein sequence, read N- to C-terminus: Shikimate dehydrogenase (NADP(+)) (269 aa).

Shikimate contacts are provided by residues T22 to S24 and T68. The active-site Proton acceptor is the K72. Shikimate-binding residues include N93 and D104. NADP(+) is bound by residues G128–A132, N152–R157, and F210. Residue Y212 participates in shikimate binding. G233 provides a ligand contact to NADP(+).

Belongs to the shikimate dehydrogenase family. As to quaternary structure, homodimer.

It catalyses the reaction shikimate + NADP(+) = 3-dehydroshikimate + NADPH + H(+). It participates in metabolic intermediate biosynthesis; chorismate biosynthesis; chorismate from D-erythrose 4-phosphate and phosphoenolpyruvate: step 4/7. In terms of biological role, involved in the biosynthesis of the chorismate, which leads to the biosynthesis of aromatic amino acids. Catalyzes the reversible NADPH linked reduction of 3-dehydroshikimate (DHSA) to yield shikimate (SA). This chain is Shikimate dehydrogenase (NADP(+)), found in Saccharolobus solfataricus (strain ATCC 35092 / DSM 1617 / JCM 11322 / P2) (Sulfolobus solfataricus).